The chain runs to 72 residues: Putative beta-neurotoxin (72 aa).

Residues 1 to 7 (IDMVVEC) form the signal peptide. Residues 9–71 (KDGYLMEHDG…TWSRATNRCG (63 aa)) enclose the LCN-type CS-alpha/beta domain. 4 disulfide bridges follow: Cys-19/Cys-70, Cys-23/Cys-45, Cys-31/Cys-51, and Cys-35/Cys-53.

In terms of tissue distribution, expressed by the venom gland.

The protein localises to the secreted. Functionally, beta toxins bind voltage-independently at site-4 of sodium channels (Nav) and shift the voltage of activation toward more negative potentials thereby affecting sodium channel activation and promoting spontaneous and repetitive firing. This is Putative beta-neurotoxin from Tityus pachyurus (Colombian scorpion).